Here is a 246-residue protein sequence, read N- to C-terminus: Ribonuclease PH (246 aa).

Phosphate is bound by residues arginine 91 and 129–131 (GTR).

It belongs to the RNase PH family. As to quaternary structure, homohexameric ring arranged as a trimer of dimers.

The catalysed reaction is tRNA(n+1) + phosphate = tRNA(n) + a ribonucleoside 5'-diphosphate. In terms of biological role, phosphorolytic 3'-5' exoribonuclease that plays an important role in tRNA 3'-end maturation. Removes nucleotide residues following the 3'-CCA terminus of tRNAs; can also add nucleotides to the ends of RNA molecules by using nucleoside diphosphates as substrates, but this may not be physiologically important. Probably plays a role in initiation of 16S rRNA degradation (leading to ribosome degradation) during starvation. This is Ribonuclease PH from Burkholderia ambifaria (strain MC40-6).